A 397-amino-acid polypeptide reads, in one-letter code: Lysophospholipid transporter LplT (397 aa).

Residues 1–17 (MSESVHTNTSLWSKGMK) lie on the Periplasmic side of the membrane. A helical transmembrane segment spans residues 18-38 (AVIVAQFLSAFGDNALLFATL). Residues 39–52 (ALLKAQFYPEWSQP) are Cytoplasmic-facing. A helical membrane pass occupies residues 53–73 (ILQMVFVGAYILFAPFVGQVA). Over 74-90 (DSFAKGRVMMFANGLKL) the chain is Periplasmic. A helical membrane pass occupies residues 91 to 111 (LGAASICFGINPFLGYTLVGV). Residues 112-144 (GAAAYSPAKYGILGELTTGSKLVKANGLMEAST) lie on the Cytoplasmic side of the membrane. A helical transmembrane segment spans residues 145-165 (IAAILLGSVAGGVLADWHVLV). Position 166 (Ala166) is a topological domain, periplasmic. The helical transmembrane segment at 167-187 (LAACALAYGGAVVANIYIPKL) threads the bilayer. The Cytoplasmic portion of the chain corresponds to 188-226 (AAARPGQSWNLINMTRSFLNACTSLWRNGETRFSLVGTS). A helical membrane pass occupies residues 227–247 (LFWGAGVTLRFLLVLWVPVAL). Residues 248-256 (GITDNATPT) lie on the Periplasmic side of the membrane. A helical membrane pass occupies residues 257–277 (YLNAMVAIGIVVGAGAAAKLV). The Cytoplasmic portion of the chain corresponds to 278–280 (TLE). A helical membrane pass occupies residues 281–301 (TMSRCMPAGILIGVVVLIFSL). Residues 302–304 (QHE) lie on the Periplasmic side of the membrane. A helical transmembrane segment spans residues 305-325 (LLPAYALLMLIGVMGGFFVVP). Residues 326-343 (LNALLQERGKKSVGAGNA) are Cytoplasmic-facing. Residues 344–364 (IAVQNLGENSAMLLMLGIYSL) form a helical membrane-spanning segment. Residues 365–366 (AV) lie on the Periplasmic side of the membrane. A helical transmembrane segment spans residues 367–387 (MVGIPVVPIGIGFGALFALAI). Topologically, residues 388 to 397 (TALWIWQRRH) are cytoplasmic.

This sequence belongs to the major facilitator superfamily. LplT (TC 2.A.1.42) family.

The protein localises to the cell inner membrane. Catalyzes the facilitated diffusion of 2-acyl-glycero-3-phosphoethanolamine (2-acyl-GPE) into the cell. The chain is Lysophospholipid transporter LplT from Shigella sonnei (strain Ss046).